The following is a 526-amino-acid chain: Sterol 14-alpha demethylase CYP51A (526 aa).

The helical transmembrane segment at 27–47 threads the bilayer; sequence IGFAVFLVLSVVLNVLNQLLF. Y123 is a lanosterol binding site. C470 contributes to the heme binding site.

The protein belongs to the cytochrome P450 family. Heme is required as a cofactor.

It localises to the endoplasmic reticulum membrane. The catalysed reaction is a 14alpha-methyl steroid + 3 reduced [NADPH--hemoprotein reductase] + 3 O2 = a Delta(14) steroid + formate + 3 oxidized [NADPH--hemoprotein reductase] + 4 H2O + 4 H(+). It catalyses the reaction a 14alpha-methyl steroid + reduced [NADPH--hemoprotein reductase] + O2 = a 14alpha-hydroxymethyl steroid + oxidized [NADPH--hemoprotein reductase] + H2O + H(+). The enzyme catalyses a 14alpha-hydroxymethyl steroid + reduced [NADPH--hemoprotein reductase] + O2 = a 14alpha-formyl steroid + oxidized [NADPH--hemoprotein reductase] + 2 H2O + H(+). It carries out the reaction a 14alpha-formyl steroid + reduced [NADPH--hemoprotein reductase] + O2 = a Delta(14) steroid + formate + oxidized [NADPH--hemoprotein reductase] + H2O + 2 H(+). The catalysed reaction is lanosterol + 3 reduced [NADPH--hemoprotein reductase] + 3 O2 = 4,4-dimethyl-5alpha-cholesta-8,14,24-trien-3beta-ol + formate + 3 oxidized [NADPH--hemoprotein reductase] + 4 H2O + 4 H(+). It catalyses the reaction lanosterol + reduced [NADPH--hemoprotein reductase] + O2 = 32-hydroxylanosterol + oxidized [NADPH--hemoprotein reductase] + H2O + H(+). The enzyme catalyses 32-hydroxylanosterol + reduced [NADPH--hemoprotein reductase] + O2 = 32-oxolanosterol + oxidized [NADPH--hemoprotein reductase] + 2 H2O + H(+). It carries out the reaction 32-oxolanosterol + reduced [NADPH--hemoprotein reductase] + O2 = 4,4-dimethyl-5alpha-cholesta-8,14,24-trien-3beta-ol + formate + oxidized [NADPH--hemoprotein reductase] + H2O + 2 H(+). The catalysed reaction is eburicol + 3 reduced [NADPH--hemoprotein reductase] + 3 O2 = 14-demethyleburicol + formate + 3 oxidized [NADPH--hemoprotein reductase] + 4 H2O + 4 H(+). It catalyses the reaction eburicol + reduced [NADPH--hemoprotein reductase] + O2 = 32-hydroxyeburicol + oxidized [NADPH--hemoprotein reductase] + H2O + H(+). The enzyme catalyses 32-hydroxyeburicol + reduced [NADPH--hemoprotein reductase] + O2 = 32-oxoeburicol + oxidized [NADPH--hemoprotein reductase] + 2 H2O + H(+). It carries out the reaction 32-oxoeburicol + reduced [NADPH--hemoprotein reductase] + O2 = 14-demethyleburicol + formate + oxidized [NADPH--hemoprotein reductase] + H2O + 2 H(+). It participates in steroid metabolism; ergosterol biosynthesis. In terms of biological role, together with cyp51A and cyp51C, encodes the sterol 14alpha-demethylase that plays a critical role in the third module of ergosterol biosynthesis pathway, being ergosterol the major sterol component in fungal membranes that participates in a variety of functions. Essential for ascospore production. The third module or late pathway involves the ergosterol synthesis itself through consecutive reactions that mainly occur in the endoplasmic reticulum (ER) membrane. In filamentous fungi, during the initial step of this module, lanosterol (lanosta-8,24-dien-3beta-ol) can be metabolized to eburicol. Sterol 14alpha-demethylase catalyzes the three-step oxidative removal of the 14alpha-methyl group (C-32) of both these sterols in the form of formate, and converts eburicol and lanosterol to 14-demethyleburicol (4,4,24-trimethylergosta-8,14,24(28)-trienol) and 4,4-dimethyl-5alpha-cholesta-8,14,24-trien-3beta-ol, respectively, which are further metabolized by other enzymes in the pathway to ergosterol. Can also use substrates not intrinsic to fungi, such as 24,25-dihydrolanosterol (DHL), producing 4,4'-dimethyl-8,14-cholestadien-3-beta-ol, but at lower rates than the endogenous substrates. This Gibberella zeae (strain ATCC MYA-4620 / CBS 123657 / FGSC 9075 / NRRL 31084 / PH-1) (Wheat head blight fungus) protein is Sterol 14-alpha demethylase CYP51A.